The chain runs to 1915 residues: Protein TIC 214 (1915 aa).

Transmembrane regions (helical) follow at residues 18 to 38 (IINS…FSIG), 64 to 84 (FITG…HLAL), 90 to 110 (ITVL…HKYF), 126 to 146 (LNIQ…HFIL), 174 to 194 (VGWL…LIWI), and 230 to 250 (IFSI…PSTL). 2 disordered regions span residues 260–319 (KMKQ…EIRV) and 1566–1631 (NKNI…GSVL). Residues 267–277 (SEEETDVEIET) show a composition bias toward acidic residues. Residues 279–288 (SETKETKEEQ) are compositionally biased toward basic and acidic residues. The segment covering 304–315 (EKEDPDKIDETE) has biased composition (acidic residues). Residues 1587 to 1601 (KSLELENRNQEEKES) show a composition bias toward basic and acidic residues. Polar residues predominate over residues 1602–1631 (SSQGDLGSNAQNQGNLGPNAQNQGNLGSVL).

This sequence belongs to the TIC214 family. As to quaternary structure, part of the Tic complex.

It localises to the plastid. The protein resides in the chloroplast inner membrane. In terms of biological role, involved in protein precursor import into chloroplasts. May be part of an intermediate translocation complex acting as a protein-conducting channel at the inner envelope. This is Protein TIC 214 from Platanus occidentalis (Sycamore).